The sequence spans 147 residues: Small ribosomal subunit protein uS12 (147 aa).

The protein belongs to the universal ribosomal protein uS12 family. As to quaternary structure, part of the 30S ribosomal subunit.

Its function is as follows. With S4 and S5 plays an important role in translational accuracy. Located at the interface of the 30S and 50S subunits. The protein is Small ribosomal subunit protein uS12 of Pyrobaculum islandicum (strain DSM 4184 / JCM 9189 / GEO3).